Consider the following 360-residue polypeptide: D-alanine--D-alanine ligase (360 aa).

The region spanning 149 to 353 (KKLMAAEGLP…YEELLDVLVQ (205 aa)) is the ATP-grasp domain. Residue 176-231 (KNLLGLPVFVKPARGGSSIGISRVTAWEDFNKAVGLARAHDEKVIVESEIVGSEVE) coordinates ATP. Mg(2+)-binding residues include Asp-308, Glu-320, and Asn-322.

This sequence belongs to the D-alanine--D-alanine ligase family. Mg(2+) is required as a cofactor. The cofactor is Mn(2+).

It localises to the cytoplasm. It carries out the reaction 2 D-alanine + ATP = D-alanyl-D-alanine + ADP + phosphate + H(+). The protein operates within cell wall biogenesis; peptidoglycan biosynthesis. Cell wall formation. In Corynebacterium glutamicum (strain ATCC 13032 / DSM 20300 / JCM 1318 / BCRC 11384 / CCUG 27702 / LMG 3730 / NBRC 12168 / NCIMB 10025 / NRRL B-2784 / 534), this protein is D-alanine--D-alanine ligase.